Reading from the N-terminus, the 89-residue chain is Small ribosomal subunit protein uS15 (89 aa).

The protein belongs to the universal ribosomal protein uS15 family. In terms of assembly, part of the 30S ribosomal subunit. Forms a bridge to the 50S subunit in the 70S ribosome, contacting the 23S rRNA.

Functionally, one of the primary rRNA binding proteins, it binds directly to 16S rRNA where it helps nucleate assembly of the platform of the 30S subunit by binding and bridging several RNA helices of the 16S rRNA. Forms an intersubunit bridge (bridge B4) with the 23S rRNA of the 50S subunit in the ribosome. The chain is Small ribosomal subunit protein uS15 from Jannaschia sp. (strain CCS1).